The chain runs to 214 residues: Thiamine-phosphate synthase (214 aa).

4-amino-2-methyl-5-(diphosphooxymethyl)pyrimidine is bound by residues 38 to 42 and Asn70; that span reads QLREK. 2 residues coordinate Mg(2+): Asp71 and Asp90. Ser109 and Lys138 together coordinate 4-amino-2-methyl-5-(diphosphooxymethyl)pyrimidine. Gly165 lines the 2-[(2R,5Z)-2-carboxy-4-methylthiazol-5(2H)-ylidene]ethyl phosphate pocket.

Belongs to the thiamine-phosphate synthase family. It depends on Mg(2+) as a cofactor.

The catalysed reaction is 2-[(2R,5Z)-2-carboxy-4-methylthiazol-5(2H)-ylidene]ethyl phosphate + 4-amino-2-methyl-5-(diphosphooxymethyl)pyrimidine + 2 H(+) = thiamine phosphate + CO2 + diphosphate. It catalyses the reaction 2-(2-carboxy-4-methylthiazol-5-yl)ethyl phosphate + 4-amino-2-methyl-5-(diphosphooxymethyl)pyrimidine + 2 H(+) = thiamine phosphate + CO2 + diphosphate. The enzyme catalyses 4-methyl-5-(2-phosphooxyethyl)-thiazole + 4-amino-2-methyl-5-(diphosphooxymethyl)pyrimidine + H(+) = thiamine phosphate + diphosphate. Its pathway is cofactor biosynthesis; thiamine diphosphate biosynthesis; thiamine phosphate from 4-amino-2-methyl-5-diphosphomethylpyrimidine and 4-methyl-5-(2-phosphoethyl)-thiazole: step 1/1. Condenses 4-methyl-5-(beta-hydroxyethyl)thiazole monophosphate (THZ-P) and 2-methyl-4-amino-5-hydroxymethyl pyrimidine pyrophosphate (HMP-PP) to form thiamine monophosphate (TMP). This is Thiamine-phosphate synthase from Caldanaerobacter subterraneus subsp. tengcongensis (strain DSM 15242 / JCM 11007 / NBRC 100824 / MB4) (Thermoanaerobacter tengcongensis).